Reading from the N-terminus, the 645-residue chain is Threonine--tRNA ligase (645 aa).

One can recognise a TGS domain in the interval 1–63 (MEQINIQFPD…ETDGSIEIVT (63 aa)). The tract at residues 242 to 540 (DHRKIGKELE…LTEETKGAFP (299 aa)) is catalytic. Zn(2+)-binding residues include Cys-336, His-387, and His-517.

This sequence belongs to the class-II aminoacyl-tRNA synthetase family. Homodimer. Zn(2+) serves as cofactor.

It is found in the cytoplasm. It catalyses the reaction tRNA(Thr) + L-threonine + ATP = L-threonyl-tRNA(Thr) + AMP + diphosphate + H(+). Functionally, catalyzes the attachment of threonine to tRNA(Thr) in a two-step reaction: L-threonine is first activated by ATP to form Thr-AMP and then transferred to the acceptor end of tRNA(Thr). Also edits incorrectly charged L-seryl-tRNA(Thr). The sequence is that of Threonine--tRNA ligase from Staphylococcus aureus (strain JH1).